A 136-amino-acid polypeptide reads, in one-letter code: Histone H3.2 (136 aa).

Residues 1–43 (MARTKQTARKSTGGKAPRKQLATKAARKSAPATGGVKKPHRFR) are disordered. Position 5 is an N6-methylated lysine (K5). The residue at position 10 (K10) is an N6-acetyllysine; alternate. K10 bears the N6-methylated lysine; alternate mark. Position 11 is a phosphoserine (S11). T12 bears the Phosphothreonine mark. An N6-acetyllysine modification is found at K15. K19 and K24 each carry N6-acetyllysine; alternate. Residues K19 and K24 each carry the N6-methylated lysine; alternate modification. At K28 the chain carries N6-methylated lysine. The residue at position 29 (S29) is a Phosphoserine. K37 carries the N6-methylated lysine modification.

It belongs to the histone H3 family. As to quaternary structure, the nucleosome is a histone octamer containing two molecules each of H2A, H2B, H3 and H4 assembled in one H3-H4 heterotetramer and two H2A-H2B heterodimers. The octamer wraps approximately 147 bp of DNA. Acetylation is generally linked to gene activation. Can be acetylated to form H3K9ac, H3K14ac, H3K18ac and H3K23ac. H3K9ac could compete with H3K9me and prevent gene silencing. H3K9ac is restricted to euchromatin. Post-translationally, methylated to form mainly H3K4me, H3K9me, H3K18me, H3K23me, H3K27me and H3K36me. H3K4me1/2/3, H3K9me3, H3K27me3 and H3K36me1/2/3 are typical marks for euchromatin, whereas heterochromatic chromocenters are enriched in H3K9me1/2 and H3K27me1/2. H2BK143ub1 is probably prerequisite for H3K4me. In terms of processing, can be phosphorylated to form H3S10ph, H3T11ph and H3S28ph. As to expression, expressed in bicellular pollen, root tips, shoot apices, young leaves and ovules.

The protein resides in the nucleus. It is found in the nucleolus. The protein localises to the chromosome. Core component of nucleosome. Nucleosomes wrap and compact DNA into chromatin, limiting DNA accessibility to the cellular machineries which require DNA as a template. Histones thereby play a central role in transcription regulation, DNA repair, DNA replication and chromosomal stability. DNA accessibility is regulated via a complex set of post-translational modifications of histones, also called histone code, and nucleosome remodeling. The protein is Histone H3.2 (YAH3) of Lilium longiflorum (Trumpet lily).